The primary structure comprises 261 residues: Ribonuclease PH (261 aa).

Phosphate contacts are provided by residues Arg86 and Gly124–Arg126.

Belongs to the RNase PH family. In terms of assembly, homohexameric ring arranged as a trimer of dimers.

The enzyme catalyses tRNA(n+1) + phosphate = tRNA(n) + a ribonucleoside 5'-diphosphate. Phosphorolytic 3'-5' exoribonuclease that plays an important role in tRNA 3'-end maturation. Removes nucleotide residues following the 3'-CCA terminus of tRNAs; can also add nucleotides to the ends of RNA molecules by using nucleoside diphosphates as substrates, but this may not be physiologically important. Probably plays a role in initiation of 16S rRNA degradation (leading to ribosome degradation) during starvation. The polypeptide is Ribonuclease PH (Persephonella marina (strain DSM 14350 / EX-H1)).